The following is a 424-amino-acid chain: Histidinol dehydrogenase (424 aa).

3 residues coordinate NAD(+): Tyr-121, Gln-183, and Asn-206. The substrate site is built by Ser-229, Gln-251, and His-254. Residues Gln-251 and His-254 each contribute to the Zn(2+) site. Residues Glu-319 and His-320 each act as proton acceptor in the active site. Residues His-320, Asp-353, Glu-407, and His-412 each contribute to the substrate site. Residue Asp-353 coordinates Zn(2+). His-412 is a binding site for Zn(2+).

The protein belongs to the histidinol dehydrogenase family. The cofactor is Zn(2+).

It catalyses the reaction L-histidinol + 2 NAD(+) + H2O = L-histidine + 2 NADH + 3 H(+). It participates in amino-acid biosynthesis; L-histidine biosynthesis; L-histidine from 5-phospho-alpha-D-ribose 1-diphosphate: step 9/9. Catalyzes the sequential NAD-dependent oxidations of L-histidinol to L-histidinaldehyde and then to L-histidine. The sequence is that of Histidinol dehydrogenase from Halalkalibacterium halodurans (strain ATCC BAA-125 / DSM 18197 / FERM 7344 / JCM 9153 / C-125) (Bacillus halodurans).